A 172-amino-acid polypeptide reads, in one-letter code: Lipoprotein signal peptidase (172 aa).

The next 4 membrane-spanning stretches (helical) occupy residues 4–24 (LSSS…LDQV), 39–59 (VAIL…AFSF), 69–89 (WFFT…LAKL), and 93–113 (WTLE…NVID). Residues Asp122 and Asp140 contribute to the active site. Residues 136–156 (FNVADMGISIGAVLLIISEFW) traverse the membrane as a helical segment.

Belongs to the peptidase A8 family.

It localises to the cell inner membrane. It catalyses the reaction Release of signal peptides from bacterial membrane prolipoproteins. Hydrolyzes -Xaa-Yaa-Zaa-|-(S,diacylglyceryl)Cys-, in which Xaa is hydrophobic (preferably Leu), and Yaa (Ala or Ser) and Zaa (Gly or Ala) have small, neutral side chains.. It functions in the pathway protein modification; lipoprotein biosynthesis (signal peptide cleavage). Its function is as follows. This protein specifically catalyzes the removal of signal peptides from prolipoproteins. The protein is Lipoprotein signal peptidase of Hydrogenovibrio crunogenus (strain DSM 25203 / XCL-2) (Thiomicrospira crunogena).